Here is a 72-residue protein sequence, read N- to C-terminus: Metallothionein-like protein type 2 A (72 aa).

It belongs to the metallothionein superfamily. Type 15 family. As to expression, leaves and roots.

In terms of biological role, metallothioneins have a high content of cysteine residues that bind various heavy metals. The polypeptide is Metallothionein-like protein type 2 A (MTA) (Solanum lycopersicum (Tomato)).